The chain runs to 497 residues: Casein kinase I isoform delta (497 aa).

Disordered regions lie at residues 1 to 58 (MATM…EEMN) and 86 to 109 (PIQQHQQPPLLQQAQPSQIPHPTQ). Residues 14 to 34 (WHNNTSTPMDTTEPATNSHNP) show a composition bias toward polar residues. Residues 88–105 (QQHQQPPLLQQAQPSQIP) show a composition bias toward low complexity. A Protein kinase domain is found at 191-458 (FRLGRKIGSG…YLRNLFRTLF (268 aa)). Residues 197–205 (IGSGSFGDI) and Lys-220 each bind ATP. The active-site Proton acceptor is the Asp-310.

It belongs to the protein kinase superfamily. CK1 Ser/Thr protein kinase family. Casein kinase I subfamily. In terms of assembly, monomer. As to expression, expressed throughout larval development and into the adult stage in both hypodermal seam cells and the hermaphrodite specific neuron.

The protein resides in the cytoplasm. The protein localises to the nucleus. It localises to the chromosome. Its subcellular location is the centromere. It is found in the cell junction. The protein resides in the adherens junction. It catalyses the reaction L-seryl-[protein] + ATP = O-phospho-L-seryl-[protein] + ADP + H(+). It carries out the reaction L-threonyl-[protein] + ATP = O-phospho-L-threonyl-[protein] + ADP + H(+). Its activity is regulated as follows. Exhibits substrate-dependent heparin activation. Functionally, essential serine/threonine-protein kinase that regulates diverse cellular growth and survival processes including Wnt signaling, DNA repair and circadian rhythms. Casein kinases are operationally defined by their preferential utilization of acidic proteins. Positively regulates the expression of components of the heterochronic pathway, which regulate developmental timing, such as the transcriptional repressor lin-42 and microRNAs such as let-7. Negatively regulates cell cycle exit and cell fusion to prevent the premature differentiation of hypodermal seam cells into adult cells. Plays a role in regulating axon branching and subsequently, the maturation of the nervous system, most likely by preventing the premature termination of transcripts for proteins such as Ankyrin/unc-44, which are required for maintaining the nervous system. May phosphorylate ssup-72 to promote nervous system maturation. This chain is Casein kinase I isoform delta, found in Caenorhabditis elegans.